Consider the following 612-residue polypeptide: Chaperone protein DnaK (612 aa).

Thr173 bears the Phosphothreonine; by autocatalysis mark. The tract at residues 576-612 (AAKQAQAQQDGGAGAKKADDNVVDAEYEEVNDDKDQK) is disordered. Residues 596–612 (NVVDAEYEEVNDDKDQK) are compositionally biased toward acidic residues.

Belongs to the heat shock protein 70 family.

In terms of biological role, acts as a chaperone. The polypeptide is Chaperone protein DnaK (Bacillus licheniformis (strain ATCC 14580 / DSM 13 / JCM 2505 / CCUG 7422 / NBRC 12200 / NCIMB 9375 / NCTC 10341 / NRRL NRS-1264 / Gibson 46)).